The primary structure comprises 38 residues: Large ribosomal subunit protein bL36 (38 aa).

It belongs to the bacterial ribosomal protein bL36 family.

The protein is Large ribosomal subunit protein bL36 of Flavobacterium johnsoniae (strain ATCC 17061 / DSM 2064 / JCM 8514 / BCRC 14874 / CCUG 350202 / NBRC 14942 / NCIMB 11054 / UW101) (Cytophaga johnsonae).